Here is a 94-residue protein sequence, read N- to C-terminus: Aspartyl/glutamyl-tRNA(Asn/Gln) amidotransferase subunit C (94 aa).

The protein belongs to the GatC family. Heterotrimer of A, B and C subunits.

The catalysed reaction is L-glutamyl-tRNA(Gln) + L-glutamine + ATP + H2O = L-glutaminyl-tRNA(Gln) + L-glutamate + ADP + phosphate + H(+). The enzyme catalyses L-aspartyl-tRNA(Asn) + L-glutamine + ATP + H2O = L-asparaginyl-tRNA(Asn) + L-glutamate + ADP + phosphate + 2 H(+). Its function is as follows. Allows the formation of correctly charged Asn-tRNA(Asn) or Gln-tRNA(Gln) through the transamidation of misacylated Asp-tRNA(Asn) or Glu-tRNA(Gln) in organisms which lack either or both of asparaginyl-tRNA or glutaminyl-tRNA synthetases. The reaction takes place in the presence of glutamine and ATP through an activated phospho-Asp-tRNA(Asn) or phospho-Glu-tRNA(Gln). This Solidesulfovibrio magneticus (strain ATCC 700980 / DSM 13731 / RS-1) (Desulfovibrio magneticus) protein is Aspartyl/glutamyl-tRNA(Asn/Gln) amidotransferase subunit C.